The following is a 322-amino-acid chain: Adenine deaminase (322 aa).

Zn(2+) contacts are provided by His11, His13, and His189. Residue Glu192 is the Proton donor of the active site. A Zn(2+)-binding site is contributed by Asp270. Residue Asp271 coordinates substrate.

This sequence belongs to the metallo-dependent hydrolases superfamily. Adenosine and AMP deaminases family. Adenine deaminase type 2 subfamily. Zn(2+) is required as a cofactor.

It catalyses the reaction adenine + H2O + H(+) = hypoxanthine + NH4(+). Functionally, catalyzes the hydrolytic deamination of adenine to hypoxanthine. Plays an important role in the purine salvage pathway and in nitrogen catabolism. In Rhizobium rhizogenes (strain K84 / ATCC BAA-868) (Agrobacterium radiobacter), this protein is Adenine deaminase.